Here is a 171-residue protein sequence, read N- to C-terminus: MQAHELSGAPWHHPVFWVAVAFVLFFVLFGRKIWGALTSKLDSYADEVRQNLDEARKLRREAEAMLEDARRRKEQALAEAKRLLESAHAEAARAAQALSDDAEASIRRREKMANDRIAAAEKAAVDEVRFAAADIASRAAKDILAREFGPYADAALIDSAISKLPQALRAA.

The chain crosses the membrane as a helical span at residues 9-29 (APWHHPVFWVAVAFVLFFVLF).

It belongs to the ATPase B chain family. In terms of assembly, F-type ATPases have 2 components, F(1) - the catalytic core - and F(0) - the membrane proton channel. F(1) has five subunits: alpha(3), beta(3), gamma(1), delta(1), epsilon(1). F(0) has three main subunits: a(1), b(2) and c(10-14). The alpha and beta chains form an alternating ring which encloses part of the gamma chain. F(1) is attached to F(0) by a central stalk formed by the gamma and epsilon chains, while a peripheral stalk is formed by the delta and b chains.

It localises to the cell inner membrane. In terms of biological role, f(1)F(0) ATP synthase produces ATP from ADP in the presence of a proton or sodium gradient. F-type ATPases consist of two structural domains, F(1) containing the extramembraneous catalytic core and F(0) containing the membrane proton channel, linked together by a central stalk and a peripheral stalk. During catalysis, ATP synthesis in the catalytic domain of F(1) is coupled via a rotary mechanism of the central stalk subunits to proton translocation. Component of the F(0) channel, it forms part of the peripheral stalk, linking F(1) to F(0). This chain is ATP synthase subunit b 2, found in Granulibacter bethesdensis (strain ATCC BAA-1260 / CGDNIH1).